The following is a 442-amino-acid chain: tRNA modification GTPase MnmE (442 aa).

3 residues coordinate (6S)-5-formyl-5,6,7,8-tetrahydrofolate: R27, E84, and K124. A TrmE-type G domain is found at 221-366 (GLHVVIVGAP…LLDALQAFAE (146 aa)). GTP is bound by residues 231 to 236 (NAGKSS), 250 to 256 (SKEAGTT), and 275 to 278 (DTAG). Mg(2+)-binding residues include S235 and T256. K442 lines the (6S)-5-formyl-5,6,7,8-tetrahydrofolate pocket.

This sequence belongs to the TRAFAC class TrmE-Era-EngA-EngB-Septin-like GTPase superfamily. TrmE GTPase family. In terms of assembly, homodimer. Heterotetramer of two MnmE and two MnmG subunits. K(+) serves as cofactor.

It localises to the cytoplasm. Its function is as follows. Exhibits a very high intrinsic GTPase hydrolysis rate. Involved in the addition of a carboxymethylaminomethyl (cmnm) group at the wobble position (U34) of certain tRNAs, forming tRNA-cmnm(5)s(2)U34. The chain is tRNA modification GTPase MnmE from Brucella canis (strain ATCC 23365 / NCTC 10854 / RM-666).